A 384-amino-acid polypeptide reads, in one-letter code: Chaperone protein DnaJ (384 aa).

Residues 4–68 enclose the J domain; it reads DFYEILGVSR…EKRQMYDQMG (65 aa). Disordered regions lie at residues 29 to 60 and 73 to 131; these read REYHPDVSDDPDAEEKFKQAKKAKEVLTDEEK and EQAE…GQDL. Positions 42-60 are enriched in basic and acidic residues; the sequence is EEKFKQAKKAKEVLTDEEK. Positions 80 to 101 are enriched in gly residues; sequence GAGGGGGRGGMGGDPFGGGAGG. Positions 102-111 are enriched in low complexity; sequence FDMQDIFDQF. The segment covering 112–121 has biased composition (gly residues); it reads FGGGGRGGRG. The CR-type zinc finger occupies 145–227; it reads GATKQLNVTR…CRGNGVVQND (83 aa). Residues Cys-158, Cys-161, Cys-175, and Cys-178 each contribute to the Zn(2+) site. 4 CXXCXGXG motif repeats span residues 158-165, 175-182, 201-208, and 215-222; these read CDDCDGAG, CPECNGQG, CRRCDGEG, and CSTCRGNG. The segment at 160 to 191 is disordered; sequence DCDGAGHPPGADSETCPECNGQGQTTQVQQTP. Positions 180 to 190 are enriched in low complexity; the sequence is GQGQTTQVQQT. Zn(2+)-binding residues include Cys-201, Cys-204, Cys-215, and Cys-218.

The protein belongs to the DnaJ family. Homodimer. It depends on Zn(2+) as a cofactor.

It is found in the cytoplasm. Participates actively in the response to hyperosmotic and heat shock by preventing the aggregation of stress-denatured proteins and by disaggregating proteins, also in an autonomous, DnaK-independent fashion. Unfolded proteins bind initially to DnaJ; upon interaction with the DnaJ-bound protein, DnaK hydrolyzes its bound ATP, resulting in the formation of a stable complex. GrpE releases ADP from DnaK; ATP binding to DnaK triggers the release of the substrate protein, thus completing the reaction cycle. Several rounds of ATP-dependent interactions between DnaJ, DnaK and GrpE are required for fully efficient folding. Also involved, together with DnaK and GrpE, in the DNA replication of plasmids through activation of initiation proteins. This is Chaperone protein DnaJ from Haloarcula marismortui (strain ATCC 43049 / DSM 3752 / JCM 8966 / VKM B-1809) (Halobacterium marismortui).